Here is a 73-residue protein sequence, read N- to C-terminus: DNA-directed RNA polymerase subunit omega (73 aa).

This sequence belongs to the RNA polymerase subunit omega family. In terms of assembly, the RNAP catalytic core consists of 2 alpha, 1 beta, 1 beta' and 1 omega subunit. When a sigma factor is associated with the core the holoenzyme is formed, which can initiate transcription.

The catalysed reaction is RNA(n) + a ribonucleoside 5'-triphosphate = RNA(n+1) + diphosphate. Functionally, promotes RNA polymerase assembly. Latches the N- and C-terminal regions of the beta' subunit thereby facilitating its interaction with the beta and alpha subunits. The protein is DNA-directed RNA polymerase subunit omega of Lactobacillus delbrueckii subsp. bulgaricus (strain ATCC BAA-365 / Lb-18).